Consider the following 625-residue polypeptide: Chaperone protein HtpG (625 aa).

The interval 1-332 (MSNKQNTAVQ…TEDLSLNVSR (332 aa)) is a; substrate-binding. Positions 333–545 (EIVQSSPVMS…KDAMDSQMER (213 aa)) are b. Residues 546–625 (MMKMMQQEMP…ELIEAATLSR (80 aa)) form a c region.

The protein belongs to the heat shock protein 90 family. As to quaternary structure, homodimer.

Its subcellular location is the cytoplasm. Molecular chaperone. Has ATPase activity. This chain is Chaperone protein HtpG, found in Chlorobium luteolum (strain DSM 273 / BCRC 81028 / 2530) (Pelodictyon luteolum).